Consider the following 155-residue polypeptide: Deoxyuridine 5'-triphosphate nucleotidohydrolase (155 aa).

Substrate contacts are provided by residues 72 to 74 (RSG), N85, 89 to 91 (TVD), and K99.

This sequence belongs to the dUTPase family. Requires Mg(2+) as cofactor.

The enzyme catalyses dUTP + H2O = dUMP + diphosphate + H(+). It functions in the pathway pyrimidine metabolism; dUMP biosynthesis; dUMP from dCTP (dUTP route): step 2/2. This enzyme is involved in nucleotide metabolism: it produces dUMP, the immediate precursor of thymidine nucleotides and it decreases the intracellular concentration of dUTP so that uracil cannot be incorporated into DNA. In Parvibaculum lavamentivorans (strain DS-1 / DSM 13023 / NCIMB 13966), this protein is Deoxyuridine 5'-triphosphate nucleotidohydrolase.